A 612-amino-acid polypeptide reads, in one-letter code: UvrABC system protein C (612 aa).

One can recognise a GIY-YIG domain in the interval 18–96 (TRPGVYRMMD…IKTLKPPYNI (79 aa)). A UVR domain is found at 208-243 (PEIINETIQQMEVASAQLDFERAAVLRDQVDYLRRV).

This sequence belongs to the UvrC family. In terms of assembly, interacts with UvrB in an incision complex.

The protein localises to the cytoplasm. The UvrABC repair system catalyzes the recognition and processing of DNA lesions. UvrC both incises the 5' and 3' sides of the lesion. The N-terminal half is responsible for the 3' incision and the C-terminal half is responsible for the 5' incision. The protein is UvrABC system protein C of Hahella chejuensis (strain KCTC 2396).